The primary structure comprises 95 residues: CRISPR-associated endoribonuclease Cas2 (95 aa).

A Mg(2+)-binding site is contributed by D10.

It belongs to the CRISPR-associated endoribonuclease Cas2 protein family. As to quaternary structure, homodimer, forms a heterotetramer with a Cas1 homodimer. It depends on Mg(2+) as a cofactor.

Its function is as follows. CRISPR (clustered regularly interspaced short palindromic repeat), is an adaptive immune system that provides protection against mobile genetic elements (viruses, transposable elements and conjugative plasmids). CRISPR clusters contain sequences complementary to antecedent mobile elements and target invading nucleic acids. CRISPR clusters are transcribed and processed into CRISPR RNA (crRNA). Functions as a ssRNA-specific endoribonuclease. Involved in the integration of spacer DNA into the CRISPR cassette. This is CRISPR-associated endoribonuclease Cas2 from Geobacter sulfurreducens (strain ATCC 51573 / DSM 12127 / PCA).